A 91-amino-acid polypeptide reads, in one-letter code: Small ribosomal subunit protein uS19 (91 aa).

Belongs to the universal ribosomal protein uS19 family.

Protein S19 forms a complex with S13 that binds strongly to the 16S ribosomal RNA. The protein is Small ribosomal subunit protein uS19 of Pseudomonas syringae pv. syringae (strain B728a).